Consider the following 259-residue polypeptide: Ribosomal RNA small subunit methyltransferase A (259 aa).

Asn-13, Leu-15, Gly-40, Glu-61, Asp-85, and Asn-103 together coordinate S-adenosyl-L-methionine.

Belongs to the class I-like SAM-binding methyltransferase superfamily. rRNA adenine N(6)-methyltransferase family. RsmA subfamily.

It is found in the cytoplasm. The enzyme catalyses adenosine(1518)/adenosine(1519) in 16S rRNA + 4 S-adenosyl-L-methionine = N(6)-dimethyladenosine(1518)/N(6)-dimethyladenosine(1519) in 16S rRNA + 4 S-adenosyl-L-homocysteine + 4 H(+). Specifically dimethylates two adjacent adenosines (A1518 and A1519) in the loop of a conserved hairpin near the 3'-end of 16S rRNA in the 30S particle. May play a critical role in biogenesis of 30S subunits. This Neisseria meningitidis serogroup A / serotype 4A (strain DSM 15465 / Z2491) protein is Ribosomal RNA small subunit methyltransferase A.